The sequence spans 709 residues: Phosphoribosylformylglycinamidine synthase subunit PurL (709 aa).

The active site involves His-36. Residues Tyr-39 and Lys-80 each contribute to the ATP site. Mg(2+) is bound at residue Glu-82. Substrate is bound by residues 83 to 86 (SHNH) and Arg-105. His-84 (proton acceptor) is an active-site residue. Asp-106 contacts Mg(2+). Residue Gln-226 coordinates substrate. Asp-252 serves as a coordination point for Mg(2+). 294–296 (ETQ) lines the substrate pocket. ATP contacts are provided by Asp-470 and Gly-507. Position 510 (Ser-510) interacts with substrate.

This sequence belongs to the FGAMS family. In terms of assembly, monomer. Part of the FGAM synthase complex composed of 1 PurL, 1 PurQ and 2 PurS subunits.

It localises to the cytoplasm. It catalyses the reaction N(2)-formyl-N(1)-(5-phospho-beta-D-ribosyl)glycinamide + L-glutamine + ATP + H2O = 2-formamido-N(1)-(5-O-phospho-beta-D-ribosyl)acetamidine + L-glutamate + ADP + phosphate + H(+). It functions in the pathway purine metabolism; IMP biosynthesis via de novo pathway; 5-amino-1-(5-phospho-D-ribosyl)imidazole from N(2)-formyl-N(1)-(5-phospho-D-ribosyl)glycinamide: step 1/2. Its function is as follows. Part of the phosphoribosylformylglycinamidine synthase complex involved in the purines biosynthetic pathway. Catalyzes the ATP-dependent conversion of formylglycinamide ribonucleotide (FGAR) and glutamine to yield formylglycinamidine ribonucleotide (FGAM) and glutamate. The FGAM synthase complex is composed of three subunits. PurQ produces an ammonia molecule by converting glutamine to glutamate. PurL transfers the ammonia molecule to FGAR to form FGAM in an ATP-dependent manner. PurS interacts with PurQ and PurL and is thought to assist in the transfer of the ammonia molecule from PurQ to PurL. In Saccharolobus solfataricus (strain ATCC 35092 / DSM 1617 / JCM 11322 / P2) (Sulfolobus solfataricus), this protein is Phosphoribosylformylglycinamidine synthase subunit PurL.